Here is a 514-residue protein sequence, read N- to C-terminus: Light-independent protochlorophyllide reductase subunit B (514 aa).

D36 is a binding site for [4Fe-4S] cluster. D300 serves as the catalytic Proton donor. Substrate is bound at residue 435-436 (GM).

Belongs to the ChlB/BchB/BchZ family. Protochlorophyllide reductase is composed of three subunits; ChlL, ChlN and ChlB. Forms a heterotetramer of two ChlB and two ChlN subunits. It depends on [4Fe-4S] cluster as a cofactor.

It is found in the plastid. The protein resides in the chloroplast. It catalyses the reaction chlorophyllide a + oxidized 2[4Fe-4S]-[ferredoxin] + 2 ADP + 2 phosphate = protochlorophyllide a + reduced 2[4Fe-4S]-[ferredoxin] + 2 ATP + 2 H2O. It functions in the pathway porphyrin-containing compound metabolism; chlorophyll biosynthesis (light-independent). In terms of biological role, component of the dark-operative protochlorophyllide reductase (DPOR) that uses Mg-ATP and reduced ferredoxin to reduce ring D of protochlorophyllide (Pchlide) to form chlorophyllide a (Chlide). This reaction is light-independent. The NB-protein (ChlN-ChlB) is the catalytic component of the complex. The sequence is that of Light-independent protochlorophyllide reductase subunit B from Pleurastrum terricola (Filamentous green alga).